The primary structure comprises 215 residues: Urease accessory protein UreG (215 aa).

11–18 (GPVGAGKS) is a binding site for GTP.

Belongs to the SIMIBI class G3E GTPase family. UreG subfamily. Homodimer. UreD, UreF and UreG form a complex that acts as a GTP-hydrolysis-dependent molecular chaperone, activating the urease apoprotein by helping to assemble the nickel containing metallocenter of UreC. The UreE protein probably delivers the nickel.

The protein resides in the cytoplasm. In terms of biological role, facilitates the functional incorporation of the urease nickel metallocenter. This process requires GTP hydrolysis, probably effectuated by UreG. The protein is Urease accessory protein UreG of Cenarchaeum symbiosum (strain A).